Consider the following 1028-residue polypeptide: Pro-apoptotic serine protease nma111 (1028 aa).

A disordered region spans residues 1–46; the sequence is MDLNGETSTKRKRSSVAAPAERPAKHLKPESSTLTPGDATPANGTV. Positions 82–266 are serine protease; it reads VVSIHFCQTC…AATDYFLPLD (185 aa). Residues His120, Asp151, and Ser233 each act as charge relay system in the active site. PDZ domains follow at residues 305–377 and 876–957; these read PEWE…QRGG and VFCG…VTFD. A disordered region spans residues 989-1028; sequence TVSHDRDRHKDGITPDAANLNPDAMDEVYEEVSDVEPEVD. Positions 990–1001 are enriched in basic and acidic residues; that stretch reads VSHDRDRHKDGI. Residues 1012–1028 show a composition bias toward acidic residues; sequence AMDEVYEEVSDVEPEVD.

Belongs to the peptidase S1C family.

The protein resides in the nucleus. Its function is as follows. Nuclear serine protease which mediates apoptosis. This chain is Pro-apoptotic serine protease nma111 (nma111), found in Neosartorya fischeri (strain ATCC 1020 / DSM 3700 / CBS 544.65 / FGSC A1164 / JCM 1740 / NRRL 181 / WB 181) (Aspergillus fischerianus).